The sequence spans 87 residues: Small polypeptide DEVIL 11 (87 aa).

Positions 1–11 are enriched in polar residues; that stretch reads MASSSSLTRSG. A disordered region spans residues 1–47; the sequence is MASSSSLTRSGSVHLDEKWKLSKKDGGASRITRSSSTSSSSFNGKKQ. A compositionally biased stretch (basic and acidic residues) spans 14 to 27; sequence HLDEKWKLSKKDGG. Low complexity predominate over residues 29-41; the sequence is SRITRSSSTSSSS. Positions 51 to 82 are required for DVL/RTFL small polypeptide activity; it reads AFTRKCARLVKEQRARFYIMRRCVIMLICWRD. The chain crosses the membrane as a helical span at residues 64 to 80; that stretch reads RARFYIMRRCVIMLICW. Asn-83 is a glycosylation site (N-linked (GlcNAc...) asparagine).

The protein belongs to the DVL/RTFL small polypeptides family.

The protein localises to the cell membrane. Its function is as follows. Small polypeptide acting as a regulatory molecule which coordinates cellular responses required for differentiation, growth and development, probably by restricting polar cell proliferation in lateral organs and coordinating socket cell recruitment and differentiation at trichome sites. This is Small polypeptide DEVIL 11 from Arabidopsis thaliana (Mouse-ear cress).